A 113-amino-acid chain; its full sequence is MELEKNERINALFAFYQPLLTAKQNDYLQLYYADDYSLGEIATEFSVSRQAVYDNIKRTEKILEGYEQKLHLYAEFEARNQQADRIRDYVLSHYPTDQTLRDLIDGMENLEAK.

This sequence belongs to the UPF0122 family.

Might take part in the signal recognition particle (SRP) pathway. This is inferred from the conservation of its genetic proximity to ftsY/ffh. May be a regulatory protein. This chain is UPF0122 protein LAF_1235, found in Limosilactobacillus fermentum (strain NBRC 3956 / LMG 18251) (Lactobacillus fermentum).